The chain runs to 167 residues: E1B protein, small T-antigen (167 aa).

The interval 143-167 (GLDPVQEEEEEEENLRAGLDPSTEL) is disordered.

It belongs to the adenoviridae E1B 19 kDa protein family.

It is found in the host cell membrane. Its subcellular location is the host nucleus envelope. It localises to the host nucleus lamina. Putative adenovirus Bcl-2 homolog that inhibits apoptosis induced by TNF or FAS pathways, as well as p53-mediated apoptosis. Without E1B 19K function, virus production is compromised because of premature death of host cell. Interacts with Bax protein in cell lysates. The chain is E1B protein, small T-antigen from Human adenovirus F serotype 40 (HAdV-40).